The following is a 602-amino-acid chain: Elongation factor 4 (602 aa).

The tr-type G domain occupies 7–196 (SKIRNFCIIA…HPQNEIKSPT (190 aa)). GTP is bound by residues 19 to 24 (DHGKST) and 136 to 139 (NKVD).

This sequence belongs to the TRAFAC class translation factor GTPase superfamily. Classic translation factor GTPase family. LepA subfamily.

It localises to the cell inner membrane. The enzyme catalyses GTP + H2O = GDP + phosphate + H(+). Required for accurate and efficient protein synthesis under certain stress conditions. May act as a fidelity factor of the translation reaction, by catalyzing a one-codon backward translocation of tRNAs on improperly translocated ribosomes. Back-translocation proceeds from a post-translocation (POST) complex to a pre-translocation (PRE) complex, thus giving elongation factor G a second chance to translocate the tRNAs correctly. Binds to ribosomes in a GTP-dependent manner. This chain is Elongation factor 4, found in Prochlorococcus marinus (strain MIT 9515).